Consider the following 1350-residue polypeptide: Ubiquitin carboxyl-terminal hydrolase 47 (1350 aa).

Residues 111 to 138 (DGEQPQLTSDESGTADSSGLDDSSQEKF) form a disordered region. A compositionally biased stretch (polar residues) spans 115 to 132 (PQLTSDESGTADSSGLDD). Residues 173-548 (VGLVNQAMTC…NAYMLMYRLK (376 aa)) enclose the USP domain. C182 acts as the Nucleophile in catalysis. Residues 409 to 437 (EDEKSPQTDSCTDSGAENEGSCHSDQMSN) form a disordered region. A compositionally biased stretch (polar residues) spans 415 to 437 (QTDSCTDSGAENEGSCHSDQMSN). H487 acts as the Proton acceptor in catalysis. Disordered stretches follow at residues 815–836 (HPRP…PQED) and 859–1000 (SLQQ…ESGK). Polar residues predominate over residues 859 to 877 (SLQQHQDGGNGDSSKSTEG). A compositionally biased stretch (basic and acidic residues) spans 916–926 (PEERSDSDVNN). A compositionally biased stretch (low complexity) spans 929 to 945 (STSSVDSDILSSSHSSD). Basic and acidic residues predominate over residues 973 to 982 (KANDGKKETW). Positions 983–996 (DTAEEDSGTDSEYD) are enriched in acidic residues.

Belongs to the peptidase C19 family. USP47 subfamily.

The protein resides in the cytoplasm. The enzyme catalyses Thiol-dependent hydrolysis of ester, thioester, amide, peptide and isopeptide bonds formed by the C-terminal Gly of ubiquitin (a 76-residue protein attached to proteins as an intracellular targeting signal).. Functionally, ubiquitin-specific protease that specifically deubiquitinates monoubiquitinated DNA polymerase beta (polb), stabilizing polb thereby playing a role in base-excision repair (BER). This is Ubiquitin carboxyl-terminal hydrolase 47 (usp47) from Xenopus laevis (African clawed frog).